The primary structure comprises 358 residues: MTPPPPKRQKRDEYRKATAEATSQSGASDVAEIKLPKKKYYRQRAHANPFSDHHLKYPLSPAHMDWSSHYPAFVDPDPSHINLAGARRLLKDVEVVDIGCGFGGLLIGLAPLLPESLIVGMEIRVSVLEYVTTRIQALRAQQQKLRAATATATAASETPSQQQAQIDGKQANANAAADAASPAPSTDTEHMPTTLVPGSYENISAIRSNTMKFFPNFFARHQLSKIFICFPDPHFKARKHKARIISETLNAEYAYALRPGGLLYTITDVEEYHHWILRHFGVELGAEEESEEKSTSPNANANAGVRELFERVSEEELEKDECVRVMKEATEEGKKVARNKGNKYVAVFRRKTDPEWPA.

A disordered region spans residues 1 to 29 (MTPPPPKRQKRDEYRKATAEATSQSGASD). Residues Gly-99 and 122 to 123 (EI) contribute to the S-adenosyl-L-methionine site. A compositionally biased stretch (low complexity) spans 151 to 186 (TATAASETPSQQQAQIDGKQANANAAADAASPAPST). Residues 151–194 (TATAASETPSQQQAQIDGKQANANAAADAASPAPSTDTEHMPTT) are disordered. S-adenosyl-L-methionine contacts are provided by residues 209–210 (NT) and Cys-229. The active site involves Asp-232. 330–332 (TEE) contacts S-adenosyl-L-methionine.

This sequence belongs to the class I-like SAM-binding methyltransferase superfamily. TrmB family. In terms of assembly, forms a complex with trm82.

Its subcellular location is the nucleus. It carries out the reaction guanosine(46) in tRNA + S-adenosyl-L-methionine = N(7)-methylguanosine(46) in tRNA + S-adenosyl-L-homocysteine. It participates in tRNA modification; N(7)-methylguanine-tRNA biosynthesis. Functionally, catalyzes the formation of N(7)-methylguanine at position 46 (m7G46) in tRNA. The sequence is that of tRNA (guanine-N(7)-)-methyltransferase (trm8) from Aspergillus fumigatus (strain CBS 144.89 / FGSC A1163 / CEA10) (Neosartorya fumigata).